A 76-amino-acid polypeptide reads, in one-letter code: uncharacterized protein (76 aa).

2 consecutive transmembrane segments (helical) span residues 9-29 (AIGI…LQAV) and 45-65 (LLMI…FLDY).

The protein resides in the cell membrane. This is an uncharacterized protein from Bacillus subtilis (strain 168).